The following is a 660-amino-acid chain: Bifunctional polymyxin resistance protein ArnA (660 aa).

The tract at residues 1–304 (MKTVVFAYHD…TLGLVQGSRL (304 aa)) is formyltransferase ArnAFT. 86–88 (HLI) lines the (6R)-10-formyltetrahydrofolate pocket. His104 serves as the catalytic Proton donor; for formyltransferase activity. Residues Arg114 and 136–140 (VKRAD) each bind (6R)-10-formyltetrahydrofolate. Residues 314–660 (RRTRVLILGV…RTVDLTDKPS (347 aa)) form a dehydrogenase ArnADH region. NAD(+) is bound by residues Asp347 and 368–369 (DI). Residues Ala393, Tyr398, and 432–433 (TS) each bind UDP-alpha-D-glucuronate. Catalysis depends on Glu434, which acts as the Proton acceptor; for decarboxylase activity. UDP-alpha-D-glucuronate-binding positions include Arg460, Asn492, 526–535 (KLIDGGKQKR), and Tyr613. Arg619 serves as the catalytic Proton donor; for decarboxylase activity.

It in the N-terminal section; belongs to the Fmt family. UDP-L-Ara4N formyltransferase subfamily. The protein in the C-terminal section; belongs to the NAD(P)-dependent epimerase/dehydratase family. UDP-glucuronic acid decarboxylase subfamily. As to quaternary structure, homohexamer, formed by a dimer of trimers.

It carries out the reaction UDP-alpha-D-glucuronate + NAD(+) = UDP-beta-L-threo-pentopyranos-4-ulose + CO2 + NADH. It catalyses the reaction UDP-4-amino-4-deoxy-beta-L-arabinose + (6R)-10-formyltetrahydrofolate = UDP-4-deoxy-4-formamido-beta-L-arabinose + (6S)-5,6,7,8-tetrahydrofolate + H(+). Its pathway is nucleotide-sugar biosynthesis; UDP-4-deoxy-4-formamido-beta-L-arabinose biosynthesis; UDP-4-deoxy-4-formamido-beta-L-arabinose from UDP-alpha-D-glucuronate: step 1/3. It participates in nucleotide-sugar biosynthesis; UDP-4-deoxy-4-formamido-beta-L-arabinose biosynthesis; UDP-4-deoxy-4-formamido-beta-L-arabinose from UDP-alpha-D-glucuronate: step 3/3. The protein operates within bacterial outer membrane biogenesis; lipopolysaccharide biosynthesis. Bifunctional enzyme that catalyzes the oxidative decarboxylation of UDP-glucuronic acid (UDP-GlcUA) to UDP-4-keto-arabinose (UDP-Ara4O) and the addition of a formyl group to UDP-4-amino-4-deoxy-L-arabinose (UDP-L-Ara4N) to form UDP-L-4-formamido-arabinose (UDP-L-Ara4FN). The modified arabinose is attached to lipid A and is required for resistance to polymyxin and cationic antimicrobial peptides. This is Bifunctional polymyxin resistance protein ArnA from Escherichia coli O1:K1 / APEC.